The sequence spans 304 residues: Aspartate carbamoyltransferase catalytic subunit (304 aa).

Carbamoyl phosphate contacts are provided by arginine 53 and threonine 54. Lysine 82 lines the L-aspartate pocket. Residues arginine 103, histidine 131, and glutamine 134 each coordinate carbamoyl phosphate. The L-aspartate site is built by arginine 163 and arginine 224. Residues leucine 263 and proline 264 each coordinate carbamoyl phosphate.

It belongs to the aspartate/ornithine carbamoyltransferase superfamily. ATCase family. Heterooligomer of catalytic and regulatory chains.

It catalyses the reaction carbamoyl phosphate + L-aspartate = N-carbamoyl-L-aspartate + phosphate + H(+). The protein operates within pyrimidine metabolism; UMP biosynthesis via de novo pathway; (S)-dihydroorotate from bicarbonate: step 2/3. Catalyzes the condensation of carbamoyl phosphate and aspartate to form carbamoyl aspartate and inorganic phosphate, the committed step in the de novo pyrimidine nucleotide biosynthesis pathway. This Haloarcula marismortui (strain ATCC 43049 / DSM 3752 / JCM 8966 / VKM B-1809) (Halobacterium marismortui) protein is Aspartate carbamoyltransferase catalytic subunit.